The sequence spans 254 residues: Nickel import ATP-binding protein NikD (254 aa).

The ABC transporter domain occupies 2-241 (PQQIELRNIA…PKHTVTRSLV (240 aa)). 36–43 (GGSGSGKS) lines the ATP pocket.

It belongs to the ABC transporter superfamily. Nickel importer (TC 3.A.1.5.3) family. In terms of assembly, the complex is composed of two ATP-binding proteins (NikD and NikE), two transmembrane proteins (NikB and NikC) and a solute-binding protein (NikA).

It localises to the cell inner membrane. It catalyses the reaction Ni(2+)(out) + ATP + H2O = Ni(2+)(in) + ADP + phosphate + H(+). Functionally, part of the ABC transporter complex NikABCDE involved in nickel import. Responsible for energy coupling to the transport system. This Shigella flexneri serotype 5b (strain 8401) protein is Nickel import ATP-binding protein NikD.